A 191-amino-acid chain; its full sequence is Fe/S biogenesis protein NfuA (191 aa).

2 residues coordinate [4Fe-4S] cluster: Cys-149 and Cys-152.

This sequence belongs to the NfuA family. In terms of assembly, homodimer. The cofactor is [4Fe-4S] cluster.

Its function is as follows. Involved in iron-sulfur cluster biogenesis. Binds a 4Fe-4S cluster, can transfer this cluster to apoproteins, and thereby intervenes in the maturation of Fe/S proteins. Could also act as a scaffold/chaperone for damaged Fe/S proteins. This Erwinia tasmaniensis (strain DSM 17950 / CFBP 7177 / CIP 109463 / NCPPB 4357 / Et1/99) protein is Fe/S biogenesis protein NfuA.